Reading from the N-terminus, the 693-residue chain is Ion-translocating oxidoreductase complex subunit C (693 aa).

4Fe-4S ferredoxin-type domains are found at residues 368 to 397 and 407 to 436; these read MEPVAEEQSCIRCSKCADACPAGLLPQQLY and KARDHHLFDCIECGACAYVCPSNIPLVQYY. Positions 377, 380, 383, 387, 416, 419, 422, and 426 each coordinate [4Fe-4S] cluster. Basic and acidic residues predominate over residues 539 to 548; that stretch reads REERVREKQS. Residues 539-564 are disordered; that stretch reads REERVREKQSQQETPATEVTPEELDP.

It belongs to the 4Fe4S bacterial-type ferredoxin family. RnfC subfamily. In terms of assembly, the complex is composed of six subunits: RnfA, RnfB, RnfC, RnfD, RnfE and RnfG. The cofactor is [4Fe-4S] cluster.

The protein localises to the cell inner membrane. Functionally, part of a membrane-bound complex that couples electron transfer with translocation of ions across the membrane. The sequence is that of Ion-translocating oxidoreductase complex subunit C from Pectobacterium atrosepticum (strain SCRI 1043 / ATCC BAA-672) (Erwinia carotovora subsp. atroseptica).